A 434-amino-acid chain; its full sequence is Cytochrome c biogenesis protein CcsB (434 aa).

The next 3 membrane-spanning stretches (helical) occupy residues 15–35, 73–93, and 163–183; these read LRVA…GTAI, SNWF…CSLR, and VGPL…VVGA.

The protein belongs to the Ccs1/CcsB family. In terms of assembly, may interact with CcsA.

It localises to the cellular thylakoid membrane. Required during biogenesis of c-type cytochromes (cytochrome c6 and cytochrome f) at the step of heme attachment. The protein is Cytochrome c biogenesis protein CcsB of Synechococcus sp. (strain RCC307).